The chain runs to 219 residues: tRNA (guanine-N(7)-)-methyltransferase (219 aa).

4 residues coordinate S-adenosyl-L-methionine: Glu-44, Asp-69, Glu-102, and Asn-125. Lys-129 and Asp-161 together coordinate substrate.

The protein belongs to the class I-like SAM-binding methyltransferase superfamily. TrmB family.

It catalyses the reaction guanosine(46) in tRNA + S-adenosyl-L-methionine = N(7)-methylguanosine(46) in tRNA + S-adenosyl-L-homocysteine. The protein operates within tRNA modification; N(7)-methylguanine-tRNA biosynthesis. Its function is as follows. Catalyzes the formation of N(7)-methylguanine at position 46 (m7G46) in tRNA. This chain is tRNA (guanine-N(7)-)-methyltransferase, found in Clostridium perfringens (strain 13 / Type A).